Here is a 2839-residue protein sequence, read N- to C-terminus: MVDSSYMCASNAFIPRISYSRSIDLKDSLLDLVKVQKESYKSFTPGNHGNERLESIFRSVFPINDPLHRATIEFISCRIDNPKYDESECIKRGITFSARVIASIRLVIMQDGISLDEYKSIKGSGDHSKLSTIIKFIGEQEVHFCELPMMTDKGTFIINGVEKVIVSQMHRSPGVFFDSDKGKTYNSGKLIYSARVIPYRGSWLDIEFDVKDLLYFRIDRKRKLPISVLLKALGLSNSDILDRFYEKIKYIKYKNSWKVPFVPDKFKGVRLPFDLMDVEGNVLFKANVRITSRLAKKLHDDELKEYLVPFDSICGLFLAEDLIDSVSSTKILSAGESIKIEDVKKLELLSIGEISVLNIDNLSVGPYILNTLFLDENMSYQDALYEIYKVLRPGEVPVLEIVEEFFHNLFFNPEYYDLSNIGRLKLNSYLGLDYDEDLTVLTHEDIIEIVRKIVLLRDGQGSVDDIDHLGNRRVRSVGEFIENQFRAGLLKLERAVIDSMSTSSLDKVSSPDFINPKVLTNVLRDFFNSSQLSQFMDQTNPLSEITHKRRLSALGPGGLTRDRAGFEVRDVHPTHYGRICPIETPEGQNIGLINSLAIYARVNKYGFIESPYRKVINRVATDQIEYLSAIDEGLYYIADASAKLDNNNRFIDDMLYCRYAGNFVMVSSDQVSYIDVSPKQVISVAASLIPFLENDDANRALMGSNMQRQAVPLLKPTAPLVGTGIESFVASGSGAVVLAKRDGIVDSSDSNSIVIRAFDEERVNYLGVDIYHLKKFQRSNHNTCINQKPLVRIGDYVKEGDVIADGPAINSGELALGQNLLVAFMSWQGYNFEDSIIISSEIVKKDLFTSIHIEEFECVVHDTPLGSEKITRAIPGVNEENLYHLDNSGIVKIGTRVGPGYILVGKITPKPSLLLPPETKLLMTIFGEKSFDCADSSLYTSPDVEGTVIDVQVFTRRGVEENERALLIKQKEMNDLEKERDYIINVASEYFYDELKKLLVHSCSQDQEKLDAIEREQWWGIGLKNRSISEQVKNLKKDFDKKVSNTIAQFKQKVEKLDEGYDLPQGVLMSVKVFIAVKHSLQPGDKMAGRHGNKGVISRVVPVEDMPYLEDGTPVDIILNPLGVPSRMNVGQILETHVGWACKKLGERVGNILDEINKINSDFCKEIRSLDDNNFAKFAAVYFDNKKTEEVRDDEITDSLVNIPNKGLLNDELNALVENYLNSCKSAYDNLRSFLIEVYSCGSDVSICNNIRDISNSNLIEFAHKLRNGIPVAAPVFEGPKDKNIIKLFTLAGLDPSGQTEAYDGRTGEKFDRKVTVGYMYMLKLHHLVDDKIHARSVGPYSLVTQQPLGGKSHFGGQRFGEMECWALQAYGAAYTLQEMLTVKSDDINGRVKIYESIIKGDSNFECGTPESFNVMIKELRSLCLNVALKQNNVVIEDISHTNIAQSFDKIGISIASPENIKSMSYGEVKDVSTANYRTFKVEKGGLFCPKIFGPVNDDECLCGKYKKRRHRGRICEKCGVEVTSSKVRRERMGHIELASPVAHIWFLKSLPSRIGALLDMSLRDIENILYSDNYIVIDPLVSPFEKGEIISEKIYNEAKDDYGIDSFVAMQGVEAIRELLTCLDLHQIRKDLRLELESVASEIRRKKIIKRLRIIENFIKSGNRPEWMILTTIPILPPDLRPLVSLESGRPAVSDLNHHYRTIINRNNRLRKLLSLNPPEIMIRNEKRMLQEAVDSLFDNSRRNALTNKAGAIGYKKSISDMLKGKQGRFRQNLLGKRVDYSGRSVIVVGPALKLNQCGLPKRMALELFKPFVYSKLKLYGMAPTIKFASKLIRAEKPEVWDMLEEVIKEHPVLLNRAPTLHRLGIQAFEPILIEGKAIQLHPLVCTAFNADFDGDQMAVHVPISLEAQLEARVLMMSTNNVLSPSNGRPIIVPSKDIILGIYYLTLQEQTDKEGDDLPFLGTFGEVEHSLSDGTLHIHSSIKYRIEYTNSEGETCYKTIRTTPGRLILWQIFPKHENLNFDLVNQVLTVKEVTSIVDLIYRNCGQSATVEFSDRLMVLGFEYATFSGISFSRCDLVIPETKAEHVDHARGEIKKFSMQYQDGLITRSERYNKVIDEWSKCTDMIANDMLKSISVYDRNSKYNSVYMMVNSGARGSTSQMKQLAGMRGLMTKPSGEIIETPIISNFREGLNVFEYFNSTHGARKGLADTALKTANSGYLTRRLVDVSQNCIVTKHDCKTKNGLVVRATVEGGTIVASLESVVLGRTAANDIYNPVTKELLVKAGELIDEDKVKQINIAGLDAVKIRSPLTCEVSPGVCSLCYGRDLATGKIVSIGEAVGVIAAQSVGEPGTQLTMRTFHIGGVMTRGVESSNIIASINAKIKLSNSNIIIDKNGDKIAISRSCEVVLIDSLGSEKLRHSIPYGAKLCVDEGKSVKIGDKIAEWDPYTLPIITEKTGTVLYQDLKDGVSITEVMDESTGISSKVVKDWKLYSGGANLRPRIVLLDDNGKVMTLASGIEACYFIPIGAVLNVQDGQKVHAGDVITRTPRESVKTRDITGGLPRVIELFEARRPREHAIVSEIDGHVVFSEKDRRGKRSVLIKPLNEQISPIEYLVSRSKHVIVNEGDFVRKGDLLMDGDPDLHDILRVLGLEALAHYMISEIQQVYRLQGVRIDNKHLEVILKQMLQKVEITDPGDTMYLVGESIDKLEVDKGNDVMSNSGKRPACYLPILQGITRASLETKSFISAASFQETTKVLTEAAFCGKEDPLSGLKENVIVGRLIPAGTGLIMSKVRALSLCDNMDKYEKYFDIEAYDEKLLEDNGCHLHSGKKESVAESRYN.

A DNA-directed RNA polymerase subunit beta region spans residues 1-1433 (MVDSSYMCAS…CLNVALKQNN (1433 aa)). The interval 1436 to 2839 (IEDISHTNIA…KESVAESRYN (1404 aa)) is DNA-directed RNA polymerase subunit beta'. Cys-1501, Cys-1503, Cys-1516, and Cys-1519 together coordinate Zn(2+). 3 residues coordinate Mg(2+): Asp-1893, Asp-1895, and Asp-1897. Residues Cys-2238, Cys-2312, Cys-2319, and Cys-2322 each coordinate Zn(2+).

In the N-terminal section; belongs to the RNA polymerase beta chain family. This sequence in the C-terminal section; belongs to the RNA polymerase beta' chain family. The RNAP catalytic core consists of 2 alpha, 1 beta/beta' and 1 omega subunit. When a sigma factor is associated with the core the holoenzyme is formed, which can initiate transcription. The cofactor is Mg(2+). It depends on Zn(2+) as a cofactor.

The enzyme catalyses RNA(n) + a ribonucleoside 5'-triphosphate = RNA(n+1) + diphosphate. In terms of biological role, DNA-dependent RNA polymerase catalyzes the transcription of DNA into RNA using the four ribonucleoside triphosphates as substrates. The sequence is that of Bifunctional DNA-directed RNA polymerase subunit beta-beta' (rpoBC) from Wolbachia sp. subsp. Brugia malayi (strain TRS).